The following is a 575-amino-acid chain: NEDD4-binding protein 2-like 2 (575 aa).

Composition is skewed to basic and acidic residues over residues 69 to 87 (QEDK…EMPG), 129 to 142 (PPEK…KSET), and 149 to 167 (DSKR…KLEM). Disordered regions lie at residues 69–169 (QEDK…EMDT) and 555–575 (GEQR…ADDY). The stretch at 162–194 (SKKLEMDTELSQFYKEIEELENENEASQGSCTE) forms a coiled coil. Positions 564–575 (GSHSQVSIADDY) are enriched in polar residues.

In Mus musculus (Mouse), this protein is NEDD4-binding protein 2-like 2 (N4bp2l2).